A 322-amino-acid polypeptide reads, in one-letter code: Putative HTH-type transcriptional regulatory protein rrnAC2519 (322 aa).

Residues 132–189 (LADVREDRDWSLGRLAKELGVSRRTVSKYEDGMDASVEVAAELEDLFDAPLTSPVSVL) form the HTH cro/C1-type domain. A DNA-binding region (H-T-H motif) is located at residues 143–162 (LGRLAKELGVSRRTVSKYED).

This Haloarcula marismortui (strain ATCC 43049 / DSM 3752 / JCM 8966 / VKM B-1809) (Halobacterium marismortui) protein is Putative HTH-type transcriptional regulatory protein rrnAC2519.